Reading from the N-terminus, the 227-residue chain is Ubiquitin domain-containing protein 1 (227 aa).

The tract at residues 1–42 (MGNCVGRQRRERPAAPGHPRKRAGRNEPLKKERLKWKSDYPM) is disordered. The span at 24–38 (GRNEPLKKERLKWKS) shows a compositional bias: basic and acidic residues. Residues 149–224 (FPLKVRLSTG…IQVIINQPPP (76 aa)) enclose the Ubiquitin-like domain.

As to quaternary structure, interacts with UBTD1.

In terms of biological role, may be involved in the regulation of cellular senescence through a positive feedback loop with TP53. Is a TP53 downstream target gene that increases the stability of TP53 protein by promoting the ubiquitination and degradation of MDM2. This Mus musculus (Mouse) protein is Ubiquitin domain-containing protein 1 (Ubtd1).